The chain runs to 257 residues: Large ribosomal subunit protein uL3 (257 aa).

The residue at position 151 (glutamine 151) is an N5-methylglutamine. Residues tyrosine 218–serine 257 form a disordered region. Positions alanine 225–proline 236 are enriched in low complexity.

The protein belongs to the universal ribosomal protein uL3 family. Part of the 50S ribosomal subunit. Forms a cluster with proteins L14 and L19. Methylated by PrmB.

In terms of biological role, one of the primary rRNA binding proteins, it binds directly near the 3'-end of the 23S rRNA, where it nucleates assembly of the 50S subunit. This Sphingopyxis alaskensis (strain DSM 13593 / LMG 18877 / RB2256) (Sphingomonas alaskensis) protein is Large ribosomal subunit protein uL3.